Consider the following 145-residue polypeptide: Natriuretic peptides A (145 aa).

The first 23 residues, 1–23, serve as a signal peptide directing secretion; sequence MGTSFVGYLTFVLLLLALTKVRG. Residues 24–117 constitute a propeptide that is removed on maturation; it reads GPAYNSPLSS…KLRELLNAPR (94 aa). A disulfide bridge connects residues C125 and C141.

It belongs to the natriuretic peptide family. In terms of processing, cleaved upon secretion to produce the functional hormone.

It is found in the secreted. Its function is as follows. Hormone playing a key role in cardiovascular homeostasis through regulation of natriuresis, diuresis, and vasodilation. Has a cGMP-stimulating activity. The protein is Natriuretic peptides A of Aquarana catesbeiana (American bullfrog).